We begin with the raw amino-acid sequence, 336 residues long: Dihydroorotate dehydrogenase (quinone) (336 aa).

FMN contacts are provided by residues 62 to 66 (AGLDK) and Thr86. Residue Lys66 coordinates substrate. Residue 111–115 (NRMGF) coordinates substrate. Residues Asn139 and Asn172 each coordinate FMN. Residue Asn172 coordinates substrate. Ser175 (nucleophile) is an active-site residue. Substrate is bound at residue Asn177. The FMN site is built by Lys217 and Thr245. Residue 246–247 (NT) participates in substrate binding. FMN is bound by residues Gly268, Gly297, and 318-319 (YS).

Belongs to the dihydroorotate dehydrogenase family. Type 2 subfamily. As to quaternary structure, monomer. The cofactor is FMN.

It localises to the cell membrane. It carries out the reaction (S)-dihydroorotate + a quinone = orotate + a quinol. The protein operates within pyrimidine metabolism; UMP biosynthesis via de novo pathway; orotate from (S)-dihydroorotate (quinone route): step 1/1. Functionally, catalyzes the conversion of dihydroorotate to orotate with quinone as electron acceptor. This is Dihydroorotate dehydrogenase (quinone) from Salmonella typhi.